The sequence spans 186 residues: Elongation factor P (186 aa).

Belongs to the elongation factor P family.

Its subcellular location is the cytoplasm. It functions in the pathway protein biosynthesis; polypeptide chain elongation. In terms of biological role, involved in peptide bond synthesis. Stimulates efficient translation and peptide-bond synthesis on native or reconstituted 70S ribosomes in vitro. Probably functions indirectly by altering the affinity of the ribosome for aminoacyl-tRNA, thus increasing their reactivity as acceptors for peptidyl transferase. The sequence is that of Elongation factor P from Streptococcus mutans serotype c (strain ATCC 700610 / UA159).